We begin with the raw amino-acid sequence, 257 residues long: 14-3-3-like protein GF14-G (257 aa).

It belongs to the 14-3-3 family.

Is associated with a DNA binding complex that binds to the G box, a well-characterized cis-acting DNA regulatory element found in plant genes. This is 14-3-3-like protein GF14-G (GF14G) from Oryza sativa subsp. japonica (Rice).